A 245-amino-acid polypeptide reads, in one-letter code: Homeobox protein Hox-A4a (245 aa).

The tract at residues D34–C99 is disordered. Residues Y35 to S51 are compositionally biased toward basic and acidic residues. Polar residues-rich tracts occupy residues P53 to N73 and Q82 to C99. The Antp-type hexapeptide signature appears at V126–K131. Residues P147–H206 constitute a DNA-binding region (homeobox). Residues D205–L245 form a disordered region. Positions K212–S221 are enriched in polar residues. Over residues T230–L245 the composition is skewed to low complexity.

The protein belongs to the Antp homeobox family. Deformed subfamily.

The protein localises to the nucleus. Functionally, sequence-specific transcription factor which is part of a developmental regulatory system that provides cells with specific positional identities on the anterior-posterior axis. The polypeptide is Homeobox protein Hox-A4a (hoxa4a) (Danio rerio (Zebrafish)).